The primary structure comprises 180 residues: Insulin-like growth factor 2 (180 aa).

The signal sequence occupies residues 1–24; the sequence is MGIPMGKSMLVLLTFLAFASCCIA. Residues 25 to 52 form a b region; the sequence is AYRPSETLCGGELVDTLQFVCGDRGFYF. Disulfide bonds link Cys-33–Cys-71, Cys-45–Cys-84, and Cys-70–Cys-75. The tract at residues 53-64 is c; that stretch reads SRPASRVSRRSR. Residues 65-85 are a; the sequence is GIVEECCFRSCDLALLETYCA. Positions 86–91 are d; the sequence is TPAKSE. Positions 92 to 180 are cleaved as a propeptide — e peptide; the sequence is RDVSTPPTVL…APPEMASNRK (89 aa). O-linked (GalNAc...) threonine glycans are attached at residues Thr-96, Thr-99, and Thr-163. Residues 161–180 form a disordered region; that stretch reads LPTQDPAHGGAPPEMASNRK.

It belongs to the insulin family. In terms of assembly, interacts with MYORG; this interaction is required for IGF2 secretion. Interacts with integrins ITGAV:ITGB3 and ITGA6:ITGB4; integrin-binding is required for IGF2 signaling. Interacts with IGFBP2. Post-translationally, O-glycosylated with core 1 or possibly core 8 glycans. Thr-96 is a minor glycosylation site compared to Thr-99. In terms of processing, proteolytically processed by PCSK4, proIGF2 is cleaved at Arg-128 and Arg-92 to generate big-IGF2 and mature IGF2. As to expression, expressed in heart, placenta, lung, liver, muscle, kidney, tongue, limb, eye and pancreas.

The protein resides in the secreted. In terms of biological role, the insulin-like growth factors possess growth-promoting activity. Major fetal growth hormone in mammals. Plays a key role in regulating fetoplacental development. IGF2 is influenced by placental lactogen. Also involved in tissue differentiation. In adults, involved in glucose metabolism in adipose tissue, skeletal muscle and liver. Acts as a ligand for integrin which is required for IGF2 signaling. Positively regulates myogenic transcription factor MYOD1 function by facilitating the recruitment of transcriptional coactivators, thereby controlling muscle terminal differentiation. Inhibits myoblast differentiation and modulates metabolism via increasing the mitochondrial respiration rate. Functionally, preptin undergoes glucose-mediated co-secretion with insulin, and acts as a physiological amplifier of glucose-mediated insulin secretion. Exhibits osteogenic properties by increasing osteoblast mitogenic activity through phosphoactivation of MAPK1 and MAPK3. This Homo sapiens (Human) protein is Insulin-like growth factor 2.